A 1052-amino-acid polypeptide reads, in one-letter code: P3N-PIPO polyprotein (1052 aa).

The Peptidase S30 domain maps to Lys219–Phe362. Active-site for P1 proteinase activity residues include His270, Asp279, and Ser313. The Involved in interaction with stylet and aphid transmission signature appears at Lys414 to Cys417. An Involved in virions binding and aphid transmission motif is present at residues Pro672–Lys674. A Peptidase C6 domain is found at Met698 to Gly820. Active-site for helper component proteinase activity residues include Cys706 and His779.

Belongs to the potyviridae P3N-PIPO polyprotein family. As to quaternary structure, interacts (via PIPO domain) with host PCaP1 protein; this interaction may help to anchor the movement complex to the plasma membrane from which the complex could move to the plasmodesmata. In terms of processing, potyviral RNA is expressed as two polyproteins which undergo post-translational proteolytic processing. Genome polyprotein is processed by NIa-pro, P1 and HC-pro proteinases resulting in the production of at least ten individual proteins. P3N-PIPO is cleaved by P1 and HC-pro proteinases resulting in the production of three individual proteins. The P1 proteinase and the HC-pro cleave only their respective C-termini autocatalytically.

Its subcellular location is the host cell junction. It is found in the host plasmodesma. It catalyses the reaction Hydrolyzes a Gly-|-Gly bond at its own C-terminus, commonly in the sequence -Tyr-Xaa-Val-Gly-|-Gly, in the processing of the potyviral polyprotein.. In terms of biological role, required for aphid transmission and also has proteolytic activity. Only cleaves a Gly-Gly dipeptide at its own C-terminus. Interacts with virions and aphid stylets. Acts as a suppressor of RNA-mediated gene silencing, also known as post-transcriptional gene silencing (PTGS), a mechanism of plant viral defense that limits the accumulation of viral RNAs. May have RNA-binding activity. Allows efficient cell to cell propagation, by bypassing the host cell wall barrier. Transports viral genome to neighboring plant cells directly through plasmosdesmata, without any budding. The sequence is that of P3N-PIPO polyprotein from Turnip mosaic virus (strain Quebec) (TuMV).